Consider the following 757-residue polypeptide: Transferrin receptor protein 1 (757 aa).

Residues 1 to 67 (MMDQARSAIS…KHRRLNGRLC (67 aa)) are Cytoplasmic-facing. The segment at 1 to 67 (MMDQARSAIS…KHRRLNGRLC (67 aa)) is mediates interaction with SH3BP4. Residues serine 10 and serine 19 each carry the phosphoserine modification. Tyrosine 20 carries the phosphotyrosine modification. The Endocytosis signal signature appears at 20 to 23 (YTRF). Residue threonine 21 is modified to Phosphothreonine. The residue at position 24 (serine 24) is a Phosphoserine. A Stop-transfer sequence motif is present at residues 58 to 61 (KHRR). Cysteine 67 carries S-palmitoyl cysteine lipidation. Residues 68-88 (FGTIAVVIFFLIGFMIGYLGY) form a helical; Signal-anchor for type II membrane protein membrane-spanning segment. Over 89–757 (CKRTEQKDCV…GDIWDIDNEF (669 aa)) the chain is Extracellular. A glycan (O-linked (GalNAc...) threonine) is linked at threonine 103. One can recognise a PA domain in the interval 220-310 (SKATTVSGKL…GTGDPYTPGF (91 aa)). N-linked (GlcNAc...) asparagine glycans are attached at residues asparagine 248 and asparagine 314. The tract at residues 566–757 (NLDTYEKLIQ…GDIWDIDNEF (192 aa)) is ligand-binding. Positions 643–645 (RGD) match the Cell attachment site motif. N-linked (GlcNAc...) asparagine glycans are attached at residues asparagine 719 and asparagine 724.

The protein belongs to the peptidase M28 family. M28B subfamily. In terms of assembly, homodimer; disulfide-linked. Binds one transferrin molecule per subunit. Interacts with SH3BP4. Interacts with STEAP3; facilitates TFRC endocytosis in erythroid precursor cells. Stearoylated by ZDHHC6 which inhibits TFRC-mediated activation of the JNK pathway and promotes mitochondrial fragmentation. Stearoylation does not affect iron uptake. In terms of processing, N- and O-glycosylated, phosphorylated and palmitoylated.

It localises to the cell membrane. Its subcellular location is the melanosome. Functionally, cellular uptake of iron occurs via receptor-mediated endocytosis of ligand-occupied transferrin receptor into specialized endosomes. Endosomal acidification leads to iron release. The apotransferrin-receptor complex is then recycled to the cell surface with a return to neutral pH and the concomitant loss of affinity of apotransferrin for its receptor. Transferrin receptor is necessary for development of erythrocytes and the nervous system. Positively regulates T and B cell proliferation through iron uptake. Acts as a lipid sensor that regulates mitochondrial fusion by regulating activation of the JNK pathway. When dietary levels of stearate (C18:0) are low, promotes activation of the JNK pathway, resulting in HUWE1-mediated ubiquitination and subsequent degradation of the mitofusin MFN2 and inhibition of mitochondrial fusion. When dietary levels of stearate (C18:0) are high, TFRC stearoylation inhibits activation of the JNK pathway and thus degradation of the mitofusin MFN2. Mediates uptake of NICOL1 into fibroblasts where it may regulate extracellular matrix production. The sequence is that of Transferrin receptor protein 1 (TFRC) from Cricetulus griseus (Chinese hamster).